The sequence spans 395 residues: Obg-like ATPase 1 (395 aa).

The region spanning 22 to 280 (LKVGILGLPN…MPEDERQKYL (259 aa)) is the OBG-type G domain. Residue 31–36 (NVGKST) coordinates ATP. Mg(2+) contacts are provided by Ser-35 and Thr-55. Residue Leu-228 coordinates ATP. Residues 301-384 (QLEYFFTSGE…QDGDVIFFKF (84 aa)) enclose the TGS domain.

Belongs to the TRAFAC class OBG-HflX-like GTPase superfamily. OBG GTPase family. YchF/OLA1 subfamily. As to quaternary structure, monomer. Mg(2+) serves as cofactor. As to expression, expressed in the nervous system, pharyngeal muscles and intestine (at protein level).

Its subcellular location is the cytoplasm. Functionally, hydrolyzes ATP, and can also hydrolyze GTP with lower efficiency. Has lower affinity for GTP. Plays a role in regulating starvation-induced thermotaxis responses in AFD thermosensory neurons. In Caenorhabditis elegans, this protein is Obg-like ATPase 1.